We begin with the raw amino-acid sequence, 421 residues long: Imidazolonepropionase (421 aa).

2 residues coordinate Fe(3+): histidine 80 and histidine 82. The Zn(2+) site is built by histidine 80 and histidine 82. The 4-imidazolone-5-propanoate site is built by arginine 89, tyrosine 152, and histidine 185. Tyrosine 152 contacts N-formimidoyl-L-glutamate. Histidine 249 is a Fe(3+) binding site. Histidine 249 is a Zn(2+) binding site. Glutamate 252 lines the 4-imidazolone-5-propanoate pocket. Aspartate 324 is a Fe(3+) binding site. Position 324 (aspartate 324) interacts with Zn(2+). N-formimidoyl-L-glutamate contacts are provided by asparagine 326 and glycine 328. Residue serine 329 participates in 4-imidazolone-5-propanoate binding.

It belongs to the metallo-dependent hydrolases superfamily. HutI family. Homodimer. The cofactor is Zn(2+). Requires Fe(3+) as cofactor.

The protein localises to the cytoplasm. It catalyses the reaction 4-imidazolone-5-propanoate + H2O = N-formimidoyl-L-glutamate. It participates in amino-acid degradation; L-histidine degradation into L-glutamate; N-formimidoyl-L-glutamate from L-histidine: step 3/3. Functionally, catalyzes the hydrolytic cleavage of the carbon-nitrogen bond in imidazolone-5-propanoate to yield N-formimidoyl-L-glutamate. It is the third step in the universal histidine degradation pathway. This Bacillus subtilis (strain 168) protein is Imidazolonepropionase.